The sequence spans 154 residues: Protein X (154 aa).

Residues 68-117 (PCALRFTSARRMETTVNAHQILPKVLHKRTLGLSAMSTTDLEAYFKDCLF) form a mitochondrial targeting sequence region.

Belongs to the orthohepadnavirus protein X family. In terms of assembly, may form homodimer. May interact with host CEBPA, CFLAR, CREB1, DDB1, E4F1, HBXIP, HSPD1/HSP60, NFKBIA, POLR2E and SMAD4. Interacts with host SMC5-SMC6 complex and induces its degradation. Interacts with host TRPC4AP; leading to prevent ubiquitination of TRPC4AP. Interacts with host PLSCR1; this interaction promotes ubiquitination and degradation of HBx and impairs HBx-mediated cell proliferation. A fraction may be phosphorylated in insect cells and HepG2 cells, a human hepatoblastoma cell line. Phosphorylated in vitro by host protein kinase C or mitogen-activated protein kinase. N-acetylated in insect cells.

It localises to the host cytoplasm. The protein localises to the host nucleus. The protein resides in the host mitochondrion. Its function is as follows. Multifunctional protein that plays a role in silencing host antiviral defenses and promoting viral transcription. Does not seem to be essential for HBV infection. May be directly involved in development of cirrhosis and liver cancer (hepatocellular carcinoma). Most of cytosolic activities involve modulation of cytosolic calcium. The effect on apoptosis is controversial depending on the cell types in which the studies have been conducted. May induce apoptosis by localizing in mitochondria and causing loss of mitochondrial membrane potential. May also modulate apoptosis by binding host CFLAR, a key regulator of the death-inducing signaling complex (DISC). Promotes viral transcription by using the host E3 ubiquitin ligase DDB1 to target the SMC5-SMC6 complex to proteasomal degradation. This host complex would otherwise bind to viral episomal DNA, and prevents its transcription. Moderately stimulates transcription of many different viral and cellular transcription elements. Promoters and enhancers stimulated by HBx contain DNA binding sites for NF-kappa-B, AP-1, AP-2, c-EBP, ATF/CREB, or the calcium-activated factor NF-AT. The chain is Protein X from Hepatitis B virus genotype E (isolate Cote d'Ivoire/ABI-212/2003) (HBV-E).